The sequence spans 517 residues: Probable mannosyltransferase KTR7 (517 aa).

At 1-23 (MAIRLNPKVRRFLLDKCRQKRYG) the chain is on the cytoplasmic side. The helical; Signal-anchor for type II membrane protein transmembrane segment at 24–44 (FLFLGCIFAILYCMGTWPFFA) threads the bilayer. The interval 45-85 (KDIVHDPNNLPYSLQDYSTDKDEPFFRGCTDTKLYLQNPAY) is stem region. The Lumenal portion of the chain corresponds to 45–517 (KDIVHDPNNL…IRRENFRVIE (473 aa)). A catalytic region spans residues 86–517 (SKMNASFVML…IRRENFRVIE (432 aa)). Residues Asn-89 and Asn-144 are each glycosylated (N-linked (GlcNAc...) asparagine). Glu-367 acts as the Nucleophile in catalysis.

It belongs to the glycosyltransferase 15 family.

It localises to the membrane. Functionally, possible glycosyltransferase that transfers an alpha-D-mannosyl residue from GDP-mannose into lipid-linked oligosaccharide, forming an alpha-(1-&gt;2)-D-mannosyl-D-mannose linkage. This is Probable mannosyltransferase KTR7 (KTR7) from Saccharomyces cerevisiae (strain ATCC 204508 / S288c) (Baker's yeast).